The following is a 140-amino-acid chain: Probable glycine cleavage system H protein 3 (140 aa).

In terms of domain architecture, Lipoyl-binding spans 29 to 110 (VVSIGVTDLG…PYDSWIVKIR (82 aa)). Lysine 70 is modified (N6-lipoyllysine).

Belongs to the GcvH family. In terms of assembly, the glycine cleavage system is composed of four proteins: P, T, L and H. The cofactor is (R)-lipoate.

Its function is as follows. The glycine cleavage system catalyzes the degradation of glycine. The H protein shuttles the methylamine group of glycine from the P protein to the T protein. The protein is Probable glycine cleavage system H protein 3 of Saccharolobus solfataricus (strain ATCC 35092 / DSM 1617 / JCM 11322 / P2) (Sulfolobus solfataricus).